A 552-amino-acid chain; its full sequence is N-acetylglucosamine-6-sulfatase (552 aa).

An N-terminal signal peptide occupies residues 1–36 (MRLLPLAPGRLRRGSPRHLPSCSPALLLLVLGGCLG). Residues D55, D56, and C91 each coordinate Ca(2+). The active-site Nucleophile is C91. The residue at position 91 (C91) is a 3-oxoalanine (Cys). N111, N117, N183, N198, N210, N279, and N317 each carry an N-linked (GlcNAc...) asparagine glycan. Residues D326 and N327 each coordinate Ca(2+). N-linked (GlcNAc...) asparagine glycosylation is found at N362, N387, N405, N422, N449, and N480. Position 541 is a phosphoserine (S541).

It belongs to the sulfatase family. Requires Ca(2+) as cofactor. In terms of processing, the form A (78 kDa) is processed by internal peptidase cleavage to a 32 kDa N-terminal species (form B) and a 48 kDa C-terminal species. The conversion to 3-oxoalanine (also known as C-formylglycine, FGly), of a serine or cysteine residue in prokaryotes and of a cysteine residue in eukaryotes, is critical for catalytic activity.

It is found in the lysosome. The catalysed reaction is Hydrolysis of the 6-sulfate groups of the N-acetyl-D-glucosamine 6-sulfate units of heparan sulfate and keratan sulfate.. In terms of biological role, hydrolyzes 6-sulfate groups in N-acetyl-d-glucosaminide units of heparin sulfate and keratan sulfate. The chain is N-acetylglucosamine-6-sulfatase (GNS) from Homo sapiens (Human).